Here is a 360-residue protein sequence, read N- to C-terminus: Protein Wnt-2 (360 aa).

A signal peptide spans 1 to 25 (MNACLVGIWLWLPLLFTWLSPEVSS). 11 cysteine pairs are disulfide-bonded: C76/C87, C127/C135, C137/C157, C206/C220, C208/C215, C278/C309, C294/C304, C308/C348, C324/C339, C326/C336, and C331/C332. S212 is lipidated: O-palmitoleoyl serine; by PORCN. N-linked (GlcNAc...) asparagine glycosylation occurs at N295.

This sequence belongs to the Wnt family. In terms of processing, palmitoleoylation is required for efficient binding to frizzled receptors. Depalmitoleoylation leads to Wnt signaling pathway inhibition.

The protein localises to the secreted. Its subcellular location is the extracellular space. It is found in the extracellular matrix. Ligand for members of the frizzled family of seven transmembrane receptors. Probable developmental protein. May be a signaling molecule which affects the development of discrete regions of tissues. Is likely to signal over only few cell diameters. The sequence is that of Protein Wnt-2 (WNT2) from Muntiacus muntjak (Barking deer).